Consider the following 186-residue polypeptide: Auxin-responsive protein IAA4 (186 aa).

The short motif at 18–22 (LRLGL) is the EAR-like (transcriptional repression) element. The disordered stretch occupies residues 25-62 (TEETVSCGKSNKRVLPEATEKEIESTGKTETASPPKAQ). A compositionally biased stretch (basic and acidic residues) spans 38-51 (VLPEATEKEIESTG). A PB1 domain is found at 88–175 (GNYVKVSMDG…SCKRLRIMKG (88 aa)).

Belongs to the Aux/IAA family. In terms of assembly, homodimers and heterodimers. Interacts with TPL. Preferentially expressed in stems, leaves and flowers.

Its subcellular location is the nucleus. In terms of biological role, aux/IAA proteins are short-lived transcriptional factors that function as repressors of early auxin response genes at low auxin concentrations. Repression is thought to result from the interaction with auxin response factors (ARFs), proteins that bind to the auxin-responsive promoter element (AuxRE). Formation of heterodimers with ARF proteins may alter their ability to modulate early auxin response genes expression. This chain is Auxin-responsive protein IAA4 (IAA4), found in Arabidopsis thaliana (Mouse-ear cress).